A 1427-amino-acid polypeptide reads, in one-letter code: DNA-directed RNA polymerase subunit beta' (1427 aa).

Zn(2+) contacts are provided by cysteine 70, cysteine 72, cysteine 85, and cysteine 88. Mg(2+) is bound by residues aspartate 461, aspartate 463, and aspartate 465. 4 residues coordinate Zn(2+): cysteine 810, cysteine 884, cysteine 891, and cysteine 894. Disordered stretches follow at residues 1044–1065 and 1394–1427; these read QTDEATGMSSRVVTENRAAGRG and PEAAIGDDPLATVEGETHGTDADAGDYLIEGDEA.

It belongs to the RNA polymerase beta' chain family. As to quaternary structure, the RNAP catalytic core consists of 2 alpha, 1 beta, 1 beta' and 1 omega subunit. When a sigma factor is associated with the core the holoenzyme is formed, which can initiate transcription. Mg(2+) serves as cofactor. Zn(2+) is required as a cofactor.

It catalyses the reaction RNA(n) + a ribonucleoside 5'-triphosphate = RNA(n+1) + diphosphate. Its function is as follows. DNA-dependent RNA polymerase catalyzes the transcription of DNA into RNA using the four ribonucleoside triphosphates as substrates. This Novosphingobium aromaticivorans (strain ATCC 700278 / DSM 12444 / CCUG 56034 / CIP 105152 / NBRC 16084 / F199) protein is DNA-directed RNA polymerase subunit beta'.